The primary structure comprises 1938 residues: Myosin heavy chain, striated muscle (1938 aa).

One can recognise a Myosin N-terminal SH3-like domain in the interval 29–79 (DGKKNCWVPDEKEGFASAEIQSSKGDEITVKIVADSSTRTVKKDDIQSMNP). Residues 83-775 (EKLEDMANMT…VLGNLEEMRD (693 aa)) form the Myosin motor domain. 176–183 (GESGAGKT) is an ATP binding site. The interval 653–675 (LNKLMKNLYSTHPHFVRCIIPNE) is actin-binding. The 28-residue stretch at 778–805 (LSKIISMFQAHIRGYLIRKAYKKLQDQR) folds into the IQ domain. Residues 836–1938 (LLSIARQEEE…RSSVSVSASN (1103 aa)) are rodlike tail (S2 and LMM domains). A coiled-coil region spans residues 836-1938 (LLSIARQEEE…RSSVSVSASN (1103 aa)). 2 stretches are compositionally biased toward basic and acidic residues: residues 1041 to 1058 (VRGD…DLKS) and 1212 to 1225 (SKLE…KREM). 4 disordered regions span residues 1041-1062 (VRGD…TQEN), 1187-1332 (SALR…EVRN), 1344-1363 (LEEE…KANN), and 1898-1938 (HELE…SASN). Polar residues predominate over residues 1265–1285 (RSINELQSQKSRLQAENSDLT). Basic and acidic residues-rich tracts occupy residues 1286–1303 (RQLE…KEKS), 1310–1332 (EDAR…EVRN), and 1344–1354 (LEEEQESKSDV). Low complexity predominate over residues 1922-1938 (RSSVSVQRSSVSVSASN).

Belongs to the TRAFAC class myosin-kinesin ATPase superfamily. Myosin family. As to quaternary structure, muscle myosin is a hexameric protein that consists of 2 heavy chain subunits (MHC), 2 alkali light chain subunits (MLC) and 2 regulatory light chain subunits (MLC-2).

The protein resides in the cytoplasm. Its subcellular location is the myofibril. Functionally, muscle contraction. Myosin is a protein that binds to F-actin and has ATPase activity that is activated by F-actin. In Argopecten irradians (Bay scallop), this protein is Myosin heavy chain, striated muscle.